The chain runs to 1581 residues: Ankyrin repeat domain-containing protein 26 (1581 aa).

The disordered stretch occupies residues 1-22 (MKKIFGFRSKGPSPLGPSARPR). S13 carries the post-translational modification Phosphoserine. ANK repeat units lie at residues 46–76 (KDMG…GVND), 80–109 (KDRT…EIDA), 113–142 (ESST…DPNV), 146–175 (SGNT…NIEA), and 179–208 (DDLT…SIHA). Disordered stretches follow at residues 225 to 270 (RLQR…FDNK), 299 to 343 (LDNG…PVEG), 361 to 381 (SASQ…WHKS), and 488 to 652 (VLNK…QTAA). The segment covering 229 to 250 (SENSNPVDNGSEDGSLTRSYNT) has biased composition (polar residues). Phosphoserine is present on residues S239 and S260. Residues 308–319 (SDSPSESEDAIE) show a composition bias toward acidic residues. A compositionally biased stretch (polar residues) spans 327 to 337 (RVQTLSPSRQS). The segment covering 367 to 381 (PNHDNLTRADGWHKS) has biased composition (basic and acidic residues). A compositionally biased stretch (polar residues) spans 491–504 (KTETVGMTDAQTFK). Composition is skewed to basic and acidic residues over residues 505 to 516 (SEPESVSREEQT), 524 to 538 (SQQK…KNNE), and 585 to 601 (KEAK…REPA). S511 bears the Phosphoserine mark. 4 coiled-coil regions span residues 715 to 845 (RSHC…NARM), 876 to 1345 (HEKE…MVEH), 1396 to 1470 (RSQM…RSLL), and 1521 to 1550 (LTKM…FCRV).

Interacts with TRIO. Interacts with GPS2. Interacts with CCDC85B. Interacts with HMMR. As to expression, widely expressed. Expressed in the arcuate and ventromedial nuclei within the hypothalamus and in the ependyma and the circumventricular organs (at protein level).

The protein localises to the cytoplasm. It localises to the cytosol. In terms of biological role, acts as a regulator of adipogenesis. Involved in the regulation of the feeding behavior. In Mus musculus (Mouse), this protein is Ankyrin repeat domain-containing protein 26 (Ankrd26).